The chain runs to 283 residues: MKRILIVTGQSGSGKSSALQVLEDLGYYCIDNLPLALLPEIVAKLDHENNLEQLALGVDVRSTRADMQEFDHVFEQLQKHGTVDVIYLTTQDQDLIARFSASRRPHPLANRFKSLLQCIHEEKQLLIPIQFRATVHIDTTDKSVHDLKHILLSKLGQSDNLIVILQSFGYKHGIPLDADYVFDVRHLPNPHWDLELRRFSGLDEPVKQFLEASPQANEMFEDILHFLKKWLPAFAEGHRHYMTISIGCTGGQHRSVYMVDRLKQALEAEWSVQVLHREMKHWS.

9-16 (GQSGSGKS) provides a ligand contact to ATP. 59–62 (DVRS) is a binding site for GTP.

This sequence belongs to the RapZ-like family.

Displays ATPase and GTPase activities. The sequence is that of Nucleotide-binding protein ABBFA_002973 from Acinetobacter baumannii (strain AB307-0294).